A 302-amino-acid chain; its full sequence is Elongation factor Ts (302 aa).

The segment at 80 to 83 (TDFV) is involved in Mg(2+) ion dislocation from EF-Tu.

It belongs to the EF-Ts family.

The protein resides in the cytoplasm. Its function is as follows. Associates with the EF-Tu.GDP complex and induces the exchange of GDP to GTP. It remains bound to the aminoacyl-tRNA.EF-Tu.GTP complex up to the GTP hydrolysis stage on the ribosome. This is Elongation factor Ts from Methylibium petroleiphilum (strain ATCC BAA-1232 / LMG 22953 / PM1).